Reading from the N-terminus, the 798-residue chain is Cadherin-20 (798 aa).

The first 35 residues, 1-35 (MWTSGRMSNAKNLFGLGVSLYFWGLMDLTTTVLSG), serve as a signal peptide directing secretion. The propeptide occupies 36-58 (SARPLTEGPEDNLSDKLHQRMKR). Asn-47 carries an N-linked (GlcNAc...) asparagine glycan. The Extracellular portion of the chain corresponds to 59 to 618 (SWVWNQFFVL…AYVLPVSLSR (560 aa)). 5 consecutive Cadherin domains span residues 60-164 (WVWN…EPKF), 165-273 (LDGP…PPRF), 274-392 (PQKH…EPSF), 389-493 (EPSF…APEF), and 493-615 (FARF…LPVS). The short motif at 88-90 (RGD) is the Cell attachment site element. Asn-260 is a glycosylation site (N-linked (GlcNAc...) asparagine). N-linked (GlcNAc...) asparagine glycosylation is found at Asn-419, Asn-460, and Asn-541. The helical transmembrane segment at 619 to 639 (GALIAILACIFVLLVLVLLIL) threads the bilayer. At 640-798 (SMRRQRKQPY…GATDSSGALW (159 aa)) the chain is on the cytoplasmic side.

As to expression, detected in embryonic spinal cord, in the brachial and lumbar section of motor neurons (at protein level). Detected in ventro-lateral portion of embryonic spinal cord, in the brachial and lumbar section of embryonic motor neurons. Detected in embryonic adductor motor neurons and embryonic dorsal root ganglion. Detected in the caudal half of newly generated somites and in presomitic mesoderm.

It localises to the cell membrane. Functionally, cadherins are calcium-dependent cell adhesion proteins. They preferentially interact with themselves in a homophilic manner in connecting cells; cadherins may thus contribute to the sorting of heterogeneous cell types. This is Cadherin-20 (CDH20) from Gallus gallus (Chicken).